A 699-amino-acid polypeptide reads, in one-letter code: Elongation factor G (699 aa).

The 283-residue stretch at 10 to 292 (DRTRNIGIMA…AVIDYLPSPT (283 aa)) folds into the tr-type G domain. GTP-binding positions include 19 to 26 (AHIDAGKT), 90 to 94 (DTPGH), and 144 to 147 (NKMD).

Belongs to the TRAFAC class translation factor GTPase superfamily. Classic translation factor GTPase family. EF-G/EF-2 subfamily.

It is found in the cytoplasm. Catalyzes the GTP-dependent ribosomal translocation step during translation elongation. During this step, the ribosome changes from the pre-translocational (PRE) to the post-translocational (POST) state as the newly formed A-site-bound peptidyl-tRNA and P-site-bound deacylated tRNA move to the P and E sites, respectively. Catalyzes the coordinated movement of the two tRNA molecules, the mRNA and conformational changes in the ribosome. This is Elongation factor G from Coxiella burnetii (strain Dugway 5J108-111).